Reading from the N-terminus, the 252-residue chain is Triosephosphate isomerase (252 aa).

10–12 contributes to the substrate binding site; that stretch reads NWK. The active-site Electrophile is the His-96. The active-site Proton acceptor is Glu-168. Residues Gly-174, Ser-214, and 235–236 contribute to the substrate site; that span reads GG.

It belongs to the triosephosphate isomerase family. In terms of assembly, homodimer.

Its subcellular location is the cytoplasm. It catalyses the reaction D-glyceraldehyde 3-phosphate = dihydroxyacetone phosphate. It functions in the pathway carbohydrate biosynthesis; gluconeogenesis. Its pathway is carbohydrate degradation; glycolysis; D-glyceraldehyde 3-phosphate from glycerone phosphate: step 1/1. Involved in the gluconeogenesis. Catalyzes stereospecifically the conversion of dihydroxyacetone phosphate (DHAP) to D-glyceraldehyde-3-phosphate (G3P). This chain is Triosephosphate isomerase, found in Lactobacillus delbrueckii subsp. bulgaricus (strain ATCC 11842 / DSM 20081 / BCRC 10696 / JCM 1002 / NBRC 13953 / NCIMB 11778 / NCTC 12712 / WDCM 00102 / Lb 14).